Consider the following 148-residue polypeptide: Large ribosomal subunit protein bL9 (148 aa).

It belongs to the bacterial ribosomal protein bL9 family.

In terms of biological role, binds to the 23S rRNA. The protein is Large ribosomal subunit protein bL9 of Hahella chejuensis (strain KCTC 2396).